A 213-amino-acid chain; its full sequence is Pyrrolidone-carboxylate peptidase (213 aa).

Residues Glu-78, Cys-141, and His-165 contribute to the active site.

Belongs to the peptidase C15 family. In terms of assembly, homotetramer.

The protein resides in the cytoplasm. The catalysed reaction is Release of an N-terminal pyroglutamyl group from a polypeptide, the second amino acid generally not being Pro.. Its function is as follows. Removes 5-oxoproline from various penultimate amino acid residues except L-proline. This chain is Pyrrolidone-carboxylate peptidase, found in Clostridium botulinum (strain Alaska E43 / Type E3).